The following is a 427-amino-acid chain: Inward rectifier potassium channel 2 (427 aa).

Over 1–81 (MGSVRTNRYS…IFTTCVDIRW (81 aa)) the chain is Cytoplasmic. At cysteine 76 the chain carries S-nitrosocysteine. Residues 82–106 (RWMLVIFCLAFVLSWLFFGCVFWLI) traverse the membrane as a helical segment. Topologically, residues 107-128 (ALLHGDLDASKEGKACVSEVNS) are extracellular. An intramembrane region (helical; Pore-forming) is located at residues 129–140 (FTAAFLFSIETQ). The segment at residues 141-147 (TTIGYGF) is an intramembrane region (pore-forming). The Selectivity filter motif lies at 142-147 (TIGYGF). Topologically, residues 148–156 (RCVTDECPI) are extracellular. The chain crosses the membrane as a helical span at residues 157–178 (AVFMVVFQSIVGCIIDAFIIGA). The Cytoplasmic portion of the chain corresponds to 179-427 (VMAKMAKPKK…PRPLRRESEI (249 aa)). Residues 181 to 208 (AKMAKPKKRNETLVFSHNAVIAMRDGKL) are polyphosphoinositide (PIP2)-binding. Residues 384–427 (SKEEDDSENGVPESTSTDTPPDIDLHNQASVPLEPRPLRRESEI) form a disordered region. A PDZ-binding motif is present at residues 425 to 427 (SEI).

The protein belongs to the inward rectifier-type potassium channel (TC 1.A.2.1) family. KCNJ2 subfamily. In terms of assembly, homotetramer. Homomultimeric and heteromultimeric association with KCNJ4/Kir2.3. Can form heteromeric channels with Kir2.6/KCNJ18. Associates, via its PDZ-recognition domain, with a complex containing LIN7A, LIN7B, LIN7C, DLG1, CASK and APBA1. In terms of processing, S-nitrosylation increases the open probability and inward rectifying currents.

It localises to the cell membrane. It is found in the sarcolemma. Its subcellular location is the T-tubule. The catalysed reaction is K(+)(in) = K(+)(out). With respect to regulation, activated by phosphatidylinositol 4,5 biphosphate (PtdIns(4,5)P2). Functionally, inward rectifier potassium channels are characterized by a greater tendency to allow potassium to flow into the cell rather than out of it. Their voltage dependence is regulated by the concentration of extracellular potassium; as external potassium is raised, the voltage range of the channel opening shifts to more positive voltages. The inward rectification is mainly due to the blockage of outward current by internal magnesium. Can be blocked by extracellular barium or cesium. Probably participates in establishing action potential waveform and excitability of neuronal and muscle tissues. This is Inward rectifier potassium channel 2 (KCNJ2) from Macaca mulatta (Rhesus macaque).